The primary structure comprises 590 residues: Cytosolic Fe-S cluster assembly factor nar1 (590 aa).

C20 is a binding site for [4Fe-4S] cluster. Residues 25–50 (ESLPQKQSNENPYEVTTEDKVQPENP) are disordered. 5 residues coordinate [4Fe-4S] cluster: C60, C63, C66, C204, and C259. A disordered region spans residues 423–446 (PGAKVATGQTAGGRRQPISRNGAS). C461 and C465 together coordinate [4Fe-4S] cluster.

Belongs to the NARF family.

Its function is as follows. Component of the cytosolic Fe/S protein assembly machinery. Required for maturation of extramitochondrial Fe/S proteins. May play a role in the transfer of pre-assembled Fe/S clusters to target apoproteins. The protein is Cytosolic Fe-S cluster assembly factor nar1 (nar1) of Emericella nidulans (strain FGSC A4 / ATCC 38163 / CBS 112.46 / NRRL 194 / M139) (Aspergillus nidulans).